Reading from the N-terminus, the 129-residue chain is D-ribose pyranase (129 aa).

His-20 acts as the Proton donor in catalysis. Substrate is bound by residues Asp-28, His-96, and 118–120; that span reads YAN.

This sequence belongs to the RbsD / FucU family. RbsD subfamily. Homodecamer.

Its subcellular location is the cytoplasm. It carries out the reaction beta-D-ribopyranose = beta-D-ribofuranose. It participates in carbohydrate metabolism; D-ribose degradation; D-ribose 5-phosphate from beta-D-ribopyranose: step 1/2. In terms of biological role, catalyzes the interconversion of beta-pyran and beta-furan forms of D-ribose. This Streptomyces coelicolor (strain ATCC BAA-471 / A3(2) / M145) protein is D-ribose pyranase.